The following is a 604-amino-acid chain: Lipoprotein LpqB (604 aa).

An N-terminal signal peptide occupies residues 1–27; the sequence is MTMRAARLSGSTGLTAALVAVLLVLTG. Cys28 is lipidated: N-palmitoyl cysteine. Cys28 is lipidated: S-diacylglycerol cysteine. The interval 35-60 is disordered; the sequence is SAPQALGTIDREPTSEGPTPPIAGRD.

Belongs to the LpqB lipoprotein family.

Its subcellular location is the cell membrane. This chain is Lipoprotein LpqB, found in Nocardia farcinica (strain IFM 10152).